The primary structure comprises 230 residues: Ion-translocating oxidoreductase complex subunit E (230 aa).

The next 5 helical transmembrane spans lie at 39–59 (LGLGIATLLVLVGSNVTVSLV), 69–89 (IPVFVMIIASLVTCVQLLMNA), 93–113 (GLYLSLGIFIPLIVTNCIIIG), 124–144 (VLPAALDGFWMGLGMTSVLVV), and 182–202 (AFLLALLPPGAFIGVGFLIAA).

Belongs to the NqrDE/RnfAE family. As to quaternary structure, the complex is composed of six subunits: RnfA, RnfB, RnfC, RnfD, RnfE and RnfG.

It is found in the cell inner membrane. Part of a membrane-bound complex that couples electron transfer with translocation of ions across the membrane. The sequence is that of Ion-translocating oxidoreductase complex subunit E from Vibrio cholerae serotype O1 (strain ATCC 39315 / El Tor Inaba N16961).